We begin with the raw amino-acid sequence, 186 residues long: dCTP deaminase (186 aa).

K107 to R112 contacts dCTP. The Proton donor/acceptor role is filled by E133. DCTP contacts are provided by Q152, Y166, and Q176.

Belongs to the dCTP deaminase family. As to quaternary structure, homotrimer.

The catalysed reaction is dCTP + H2O + H(+) = dUTP + NH4(+). Its pathway is pyrimidine metabolism; dUMP biosynthesis; dUMP from dCTP (dUTP route): step 1/2. Catalyzes the deamination of dCTP to dUTP. This chain is dCTP deaminase, found in Campylobacter jejuni subsp. jejuni serotype O:6 (strain 81116 / NCTC 11828).